The primary structure comprises 223 residues: Phosphoribosylformylglycinamidine synthase subunit PurQ (223 aa).

One can recognise a Glutamine amidotransferase type-1 domain in the interval 2-223 (KIAVVVFPGS…KSLLKAGVQA (222 aa)). Residue cysteine 86 is the Nucleophile of the active site. Active-site residues include histidine 195 and glutamate 197.

As to quaternary structure, part of the FGAM synthase complex composed of 1 PurL, 1 PurQ and 2 PurS subunits.

The protein localises to the cytoplasm. It catalyses the reaction N(2)-formyl-N(1)-(5-phospho-beta-D-ribosyl)glycinamide + L-glutamine + ATP + H2O = 2-formamido-N(1)-(5-O-phospho-beta-D-ribosyl)acetamidine + L-glutamate + ADP + phosphate + H(+). It carries out the reaction L-glutamine + H2O = L-glutamate + NH4(+). It functions in the pathway purine metabolism; IMP biosynthesis via de novo pathway; 5-amino-1-(5-phospho-D-ribosyl)imidazole from N(2)-formyl-N(1)-(5-phospho-D-ribosyl)glycinamide: step 1/2. Functionally, part of the phosphoribosylformylglycinamidine synthase complex involved in the purines biosynthetic pathway. Catalyzes the ATP-dependent conversion of formylglycinamide ribonucleotide (FGAR) and glutamine to yield formylglycinamidine ribonucleotide (FGAM) and glutamate. The FGAM synthase complex is composed of three subunits. PurQ produces an ammonia molecule by converting glutamine to glutamate. PurL transfers the ammonia molecule to FGAR to form FGAM in an ATP-dependent manner. PurS interacts with PurQ and PurL and is thought to assist in the transfer of the ammonia molecule from PurQ to PurL. The polypeptide is Phosphoribosylformylglycinamidine synthase subunit PurQ (Lactobacillus acidophilus (strain ATCC 700396 / NCK56 / N2 / NCFM)).